The following is a 388-amino-acid chain: Probable acetyl-CoA acetyltransferase (388 aa).

Cys-84 (acyl-thioester intermediate) is an active-site residue. Residue Lys-187 forms an Isoglutamyl lysine isopeptide (Lys-Gln) (interchain with Q-Cter in protein Pup) linkage. Catalysis depends on proton acceptor residues His-345 and Cys-375.

It belongs to the thiolase-like superfamily. Thiolase family.

It catalyses the reaction 2 acetyl-CoA = acetoacetyl-CoA + CoA. The protein is Probable acetyl-CoA acetyltransferase of Mycolicibacterium smegmatis (strain ATCC 700084 / mc(2)155) (Mycobacterium smegmatis).